Consider the following 100-residue polypeptide: MGDLLSDEARRAALVELPGWREADGGKAFTRTFTFRNFNEAFGFMTRAALVAEKNDHHPDWRNVYKTVEVNLSTHDAGGITARDVALAKKMNEIAARFGI.

The protein belongs to the pterin-4-alpha-carbinolamine dehydratase family.

It carries out the reaction (4aS,6R)-4a-hydroxy-L-erythro-5,6,7,8-tetrahydrobiopterin = (6R)-L-erythro-6,7-dihydrobiopterin + H2O. This Afipia carboxidovorans (strain ATCC 49405 / DSM 1227 / KCTC 32145 / OM5) (Oligotropha carboxidovorans) protein is Putative pterin-4-alpha-carbinolamine dehydratase.